A 73-amino-acid polypeptide reads, in one-letter code: uncharacterized protein (73 aa).

This is an uncharacterized protein from Saccharomyces cerevisiae (strain ATCC 204508 / S288c) (Baker's yeast).